Reading from the N-terminus, the 588-residue chain is ATP-dependent lipid A-core flippase (588 aa).

Transmembrane regions (helical) follow at residues 23-43 (FWPV…IDAG), 56-76 (FITI…IGIT), 141-161 (DALT…TVMM), 162-182 (VICW…GIIV), 257-277 (LVIA…STVI), and 278-298 (TISA…IKPM). The region spanning 28–310 (LLGVLANILY…LTTLNATIQR (283 aa)) is the ABC transmembrane type-1 domain. One can recognise an ABC transporter domain in the interval 342-576 (IEFKHVYHAY…DGHYAQLYKV (235 aa)). 375-382 (GHSGSGKT) contributes to the ATP binding site.

This sequence belongs to the ABC transporter superfamily. Lipid exporter (TC 3.A.1.106) family. In terms of assembly, homodimer.

The protein localises to the cell inner membrane. The enzyme catalyses ATP + H2O + lipid A-core oligosaccharideSide 1 = ADP + phosphate + lipid A-core oligosaccharideSide 2.. In terms of biological role, involved in lipopolysaccharide (LPS) biosynthesis. Translocates lipid A-core from the inner to the outer leaflet of the inner membrane. Transmembrane domains (TMD) form a pore in the inner membrane and the ATP-binding domain (NBD) is responsible for energy generation. This Legionella pneumophila (strain Lens) protein is ATP-dependent lipid A-core flippase.